Reading from the N-terminus, the 927-residue chain is Non-lysosomal glucosylceramidase (927 aa).

Positions 32–62 (EETGGTKDVQVTDCKSPEDSRPPKETDCCNP) are disordered. The span at 46–58 (KSPEDSRPPKETD) shows a compositional bias: basic and acidic residues.

Belongs to the non-lysosomal glucosylceramidase family. Widely expressed. Mainly expressed in brain, heart, skeletal muscle, kidney and placenta and expressed at lower levels in liver, spleen, small intestine and lung. Detectable in colon, thymus and peripheral blood leukocytes.

The protein resides in the endoplasmic reticulum membrane. It is found in the golgi apparatus membrane. The enzyme catalyses a beta-D-glucosyl-(1&lt;-&gt;1')-N-acylsphing-4-enine + H2O = an N-acylsphing-4-enine + D-glucose. It catalyses the reaction a beta-D-galactosyl-(1&lt;-&gt;1')-N-acylsphing-4-enine + H2O = an N-acylsphing-4-enine + D-galactose. The catalysed reaction is beta-D-glucosyl-(1-&gt;3)-O-lithocholate + H2O = lithocholate + D-glucose. It carries out the reaction beta-D-glucosyl-(1-&gt;3)-O-chenodeoxycholate + H2O = chenodeoxycholate + D-glucose. The enzyme catalyses a di-trans,poly-cis-dolichyl beta-D-glucosyl phosphate + chenodeoxycholate = beta-D-glucosyl-(1-&gt;3)-O-chenodeoxycholate + a di-trans,poly-cis-dolichyl phosphate + H(+). It catalyses the reaction octyl beta-D-glucose + chenodeoxycholate = beta-D-glucosyl-(1-&gt;3)-O-chenodeoxycholate + octan-1-ol. The catalysed reaction is cholesteryl 3-beta-D-glucoside + H2O = cholesterol + D-glucose. It carries out the reaction a beta-D-glucosyl-(1&lt;-&gt;1')-N-acylsphing-4-enine + cholesterol = cholesteryl 3-beta-D-glucoside + an N-acylsphing-4-enine. The enzyme catalyses beta-D-glucosyl-N-(9Z-octadecenoyl)-sphing-4E-enine + cholesterol = N-(9Z-octadecenoyl)-sphing-4-enine + cholesteryl 3-beta-D-glucoside. It catalyses the reaction a beta-D-galactosyl-(1&lt;-&gt;1')-N-acylsphing-4-enine + cholesterol = cholesteryl 3-beta-D-galactoside + an N-acylsphing-4-enine. The catalysed reaction is 1-(beta-D-galactosyl)-N-dodecanoylsphing-4-enine + cholesterol = cholesteryl 3-beta-D-galactoside + N-dodecanoylsphing-4-enine. Its pathway is lipid metabolism; sphingolipid metabolism. It functions in the pathway steroid metabolism; cholesterol metabolism. Its activity is regulated as follows. Inhibited by AMP-DMN/N -((5-adamantane-1-yl-methoxy)pentyl)-deoxynojirimycin. Activated by Mn(2+), Co(2+) and Mg(2+) and inhibited by Zn(2+). Enzymatic activity is dependent on membrane association and requires the presence of lipids. The membrane-associated enzyme is not inhibited by condutiriol B epoxide and bromocondutiriol B epoxide. In terms of biological role, non-lysosomal glucosylceramidase that catalyzes the hydrolysis of glucosylceramides/GlcCers (such as beta-D-glucosyl-(1&lt;-&gt;1')-N-acylsphing-4-enine) to free glucose and ceramides (such as N-acylsphing-4-enine). GlcCers are membrane glycosphingolipids that have a wide intracellular distribution. They are the main precursors of more complex glycosphingolipids that play a role in cellular growth, differentiation, adhesion, signaling, cytoskeletal dynamics and membrane properties. Involved in the transglucosylation of cholesterol, transfers glucose from GlcCer to cholesterol, thereby modifying its water solubility and biological properties. Under specific conditions, may catalyze the reverse reaction, transferring glucose from cholesteryl-3-beta-D-glucoside to ceramide (such as N-acylsphing-4-enine). May play a role in the metabolism of bile acids. Able to hydrolyze bile acid 3-O-glucosides as well as to produce bile acid-glucose conjugates thanks to a bile acid glucosyl transferase activity. Catalyzes the hydrolysis of galactosylceramides/GalCers (such as beta-D-galactosyl-(1&lt;-&gt;1')-N-acylsphing-4-enine), as well as the galactosyl transfer between GalCers and cholesterol in vitro with lower activity compared with their activity against GlcCers. This chain is Non-lysosomal glucosylceramidase, found in Homo sapiens (Human).